We begin with the raw amino-acid sequence, 354 residues long: DNA polymerase IV (354 aa).

A UmuC domain is found at 6-187 (IIHVDCDCFY…LPVARLHGVG (182 aa)). The Mg(2+) site is built by Asp10 and Asp105. The active site involves Glu106.

This sequence belongs to the DNA polymerase type-Y family. As to quaternary structure, monomer. The cofactor is Mg(2+).

Its subcellular location is the cytoplasm. It catalyses the reaction DNA(n) + a 2'-deoxyribonucleoside 5'-triphosphate = DNA(n+1) + diphosphate. Poorly processive, error-prone DNA polymerase involved in untargeted mutagenesis. Copies undamaged DNA at stalled replication forks, which arise in vivo from mismatched or misaligned primer ends. These misaligned primers can be extended by PolIV. Exhibits no 3'-5' exonuclease (proofreading) activity. May be involved in translesional synthesis, in conjunction with the beta clamp from PolIII. The protein is DNA polymerase IV of Pseudomonas putida (strain GB-1).